The primary structure comprises 40 residues: Photosystem II reaction center protein J (40 aa).

Residues 8–28 traverse the membrane as a helical segment; sequence IPLWLIGTVTGTLVIGLIGIF.

It belongs to the PsbJ family. In terms of assembly, PSII is composed of 1 copy each of membrane proteins PsbA, PsbB, PsbC, PsbD, PsbE, PsbF, PsbH, PsbI, PsbJ, PsbK, PsbL, PsbM, PsbT, PsbX, PsbY, PsbZ, Psb30/Ycf12, at least 3 peripheral proteins of the oxygen-evolving complex and a large number of cofactors. It forms dimeric complexes.

It is found in the plastid. The protein resides in the chloroplast thylakoid membrane. One of the components of the core complex of photosystem II (PSII). PSII is a light-driven water:plastoquinone oxidoreductase that uses light energy to abstract electrons from H(2)O, generating O(2) and a proton gradient subsequently used for ATP formation. It consists of a core antenna complex that captures photons, and an electron transfer chain that converts photonic excitation into a charge separation. The sequence is that of Photosystem II reaction center protein J from Cycas taitungensis (Prince sago).